Consider the following 423-residue polypeptide: Mitogen-activated protein kinase 9 (423 aa).

Residues 26 to 321 (YQQLKPIGSG…VDEALRHPYI (296 aa)) form the Protein kinase domain. ATP contacts are provided by residues 32 to 40 (IGSGAQGIV) and lysine 55. Aspartate 151 serves as the catalytic Proton acceptor. Phosphothreonine; by MAP2K7 is present on threonine 183. The TXY signature appears at 183-185 (TPY). Tyrosine 185 bears the Phosphotyrosine; by MAP2K4 mark. Basic and acidic residues predominate over residues 366–375 (RSKNGVKDQP). The tract at residues 366 to 423 (RSKNGVKDQPSDAAVSSKATPSQSSSINDISSMSTEHTLASDTDSSLDASTGPLEGCR) is disordered. Residues 387–416 (SQSSSINDISSMSTEHTLASDTDSSLDAST) are compositionally biased toward low complexity.

Belongs to the protein kinase superfamily. CMGC Ser/Thr protein kinase family. MAP kinase subfamily. In terms of assembly, interacts with MECOM. Binds to at least four scaffolding proteins, MAPK8IP1/JIP-1, MAPK8IP2/JIP-2, MAPK8IP3/JIP-3/JSAP1 and SPAG9/MAPK8IP4/JIP-4. These proteins also bind other components of the JNK signaling pathway. Interacts with NFATC4. Interacts with ATF7; the interaction does not phosphorylate ATF7 but acts as a docking site for ATF7-associated partners such as JUN. Interacts with BCL10. Interacts with CTNNB1 and GSK3B. Interacts with DCLK2. Interacts with MAPKBP1. Interacts with POU5F1; phosphorylates POU5F1 at 'Ser-347'. Found in a complex with SH3RF1, RAC2, MAP3K7/TAK1, MAP2K7/MKK7, MAPK8IP1/JIP1 and MAPK8/JNK1. Mg(2+) is required as a cofactor. In terms of processing, dually phosphorylated on Thr-183 and Tyr-185 by MAP2K7 and MAP2K4, which activates the enzyme. Autophosphorylated in vitro.

The protein resides in the cytoplasm. The protein localises to the nucleus. It catalyses the reaction L-seryl-[protein] + ATP = O-phospho-L-seryl-[protein] + ADP + H(+). It carries out the reaction L-threonyl-[protein] + ATP = O-phospho-L-threonyl-[protein] + ADP + H(+). Its activity is regulated as follows. Activated by threonine and tyrosine phosphorylation by either of two dual specificity kinases, MAP2K4 and MAP2K7. MAP2K4 shows a strong preference for Tyr-185 while MAP2K7 phosphorylates Tyr-183 preferentially. Inhibited by dual specificity phosphatases, such as DUSP1. Functionally, serine/threonine-protein kinase involved in various processes such as cell proliferation, differentiation, migration, transformation and programmed cell death. Extracellular stimuli such as pro-inflammatory cytokines or physical stress stimulate the stress-activated protein kinase/c-Jun N-terminal kinase (SAP/JNK) signaling pathway. In this cascade, two dual specificity kinases MAP2K4/MKK4 and MAP2K7/MKK7 phosphorylate and activate MAPK9/JNK2. In turn, MAPK9/JNK2 phosphorylates a number of transcription factors, primarily components of AP-1 such as JUN and ATF2 and thus regulates AP-1 transcriptional activity. In response to oxidative or ribotoxic stresses, inhibits rRNA synthesis by phosphorylating and inactivating the RNA polymerase 1-specific transcription initiation factor RRN3. Promotes stressed cell apoptosis by phosphorylating key regulatory factors including TP53 and YAP1. In T-cells, MAPK8 and MAPK9 are required for polarized differentiation of T-helper cells into Th1 cells. Upon T-cell receptor (TCR) stimulation, is activated by CARMA1, BCL10, MAP2K7 and MAP3K7/TAK1 to regulate JUN protein levels. Plays an important role in the osmotic stress-induced epithelial tight-junctions disruption. When activated, promotes beta-catenin/CTNNB1 degradation and inhibits the canonical Wnt signaling pathway. Also participates in neurite growth in spiral ganglion neurons. Phosphorylates the CLOCK-BMAL1 heterodimer and plays a role in the regulation of the circadian clock. Phosphorylates POU5F1, which results in the inhibition of POU5F1's transcriptional activity and enhances its proteasomal degradation. Phosphorylates ALKBH5 in response to reactive oxygen species (ROS), promoting ALKBH5 sumoylation and inactivation. The polypeptide is Mitogen-activated protein kinase 9 (Mapk9) (Rattus norvegicus (Rat)).